The following is a 201-amino-acid chain: Thioredoxin reductase-like selenoprotein T (201 aa).

Residues 1–26 (MARSSGPLCLLLLGGLVAGILSGASA) form the signal peptide. Positions 51–54 (CVSU) form a cross-link, cysteinyl-selenocysteine (Cys-Sec). Residue Sec54 is a non-standard amino acid, selenocysteine. Residues 96-116 (VFKLVLIGLIIAGKDPFAFFG) form a helical membrane-spanning segment.

It belongs to the SelWTH family. Selenoprotein T subfamily. Post-translationally, may contain a selenide-sulfide bond between Cys-51 and Sec-54. This bond is speculated to serve as redox-active pair.

It is found in the endoplasmic reticulum membrane. It catalyses the reaction [thioredoxin]-dithiol + NADP(+) = [thioredoxin]-disulfide + NADPH + H(+). Functionally, selenoprotein with thioredoxin reductase-like oxidoreductase activity. This Xenopus tropicalis (Western clawed frog) protein is Thioredoxin reductase-like selenoprotein T (selenot).